A 168-amino-acid chain; its full sequence is CDP-archaeol synthase (168 aa).

5 helical membrane passes run 4-24 (IFEA…PVVL), 51-71 (GFFG…LMFP), 81-101 (VGVA…GSFI), 112-132 (PAVG…AYPL), and 138-158 (GEVL…NVFA).

This sequence belongs to the CDP-archaeol synthase family. It depends on Mg(2+) as a cofactor.

The protein resides in the cell membrane. The enzyme catalyses 2,3-bis-O-(geranylgeranyl)-sn-glycerol 1-phosphate + CTP + H(+) = CDP-2,3-bis-O-(geranylgeranyl)-sn-glycerol + diphosphate. It functions in the pathway membrane lipid metabolism; glycerophospholipid metabolism. Its function is as follows. Catalyzes the formation of CDP-2,3-bis-(O-geranylgeranyl)-sn-glycerol (CDP-archaeol) from 2,3-bis-(O-geranylgeranyl)-sn-glycerol 1-phosphate (DGGGP) and CTP. This reaction is the third ether-bond-formation step in the biosynthesis of archaeal membrane lipids. This Pyrococcus abyssi (strain GE5 / Orsay) protein is CDP-archaeol synthase.